The chain runs to 241 residues: tRNA (guanine-N(7)-)-methyltransferase (241 aa).

Over residues 1–10 (MTESNDTPIQ) the composition is skewed to polar residues. The disordered stretch occupies residues 1-20 (MTESNDTPIQTEEGDERQHR). The S-adenosyl-L-methionine site is built by E71, E96, D123, and D146. Residue D146 is part of the active site. Substrate-binding positions include K150, D182, and 219 to 222 (TKFE).

This sequence belongs to the class I-like SAM-binding methyltransferase superfamily. TrmB family.

The enzyme catalyses guanosine(46) in tRNA + S-adenosyl-L-methionine = N(7)-methylguanosine(46) in tRNA + S-adenosyl-L-homocysteine. It functions in the pathway tRNA modification; N(7)-methylguanine-tRNA biosynthesis. In terms of biological role, catalyzes the formation of N(7)-methylguanine at position 46 (m7G46) in tRNA. This Pseudomonas fluorescens (strain Pf0-1) protein is tRNA (guanine-N(7)-)-methyltransferase.